We begin with the raw amino-acid sequence, 375 residues long: MTTEKINLLDFDRKGMRQFFADELGEKAFRADQVMKWIYHFGVDDFDNMTNINKKLREKLQHKCEIKAPTVAEAQHSSDGTIKWAMKVGDQDVETVYIPEDDRATLCVSSQVGCALECKFCSTAQQGFNRNLKVSEIIGQVWRAAREIGLQKETGRRPITNVVMMGMGEPLLNMKNLIPALEIMLDDLGFGLSKRRVTVSTSGVVSGLDQMTGKIDVALAISLHAPNDELRSQIMPINDRWDIQDFLASVRRYIASSNANRGKVTVEYVLLDHVNDDMDHARELAELMKDTPCKINLIPFNPYPGSPYKKPSNSRIDRFQKTLMQYEHTVTVRKTRGDDIDAACGQLVGDVIDRTKRTAALKAARGAETIDVKAV.

E94 functions as the Proton acceptor in the catalytic mechanism. Residues E100 to D339 form the Radical SAM core domain. C107 and C344 are oxidised to a cystine. The [4Fe-4S] cluster site is built by C114, C118, and C121. S-adenosyl-L-methionine contacts are provided by residues G168 to E169, S200, S222 to H224, and N301. Catalysis depends on C344, which acts as the S-methylcysteine intermediate.

Belongs to the radical SAM superfamily. RlmN family. Requires [4Fe-4S] cluster as cofactor.

It localises to the cytoplasm. The catalysed reaction is adenosine(2503) in 23S rRNA + 2 reduced [2Fe-2S]-[ferredoxin] + 2 S-adenosyl-L-methionine = 2-methyladenosine(2503) in 23S rRNA + 5'-deoxyadenosine + L-methionine + 2 oxidized [2Fe-2S]-[ferredoxin] + S-adenosyl-L-homocysteine. The enzyme catalyses adenosine(37) in tRNA + 2 reduced [2Fe-2S]-[ferredoxin] + 2 S-adenosyl-L-methionine = 2-methyladenosine(37) in tRNA + 5'-deoxyadenosine + L-methionine + 2 oxidized [2Fe-2S]-[ferredoxin] + S-adenosyl-L-homocysteine. Its function is as follows. Specifically methylates position 2 of adenine 2503 in 23S rRNA and position 2 of adenine 37 in tRNAs. m2A2503 modification seems to play a crucial role in the proofreading step occurring at the peptidyl transferase center and thus would serve to optimize ribosomal fidelity. This Vibrio campbellii (strain ATCC BAA-1116) protein is Dual-specificity RNA methyltransferase RlmN.